The following is a 380-amino-acid chain: Chaperone protein DnaJ (380 aa).

A J domain is found at 5–70 (DFYEVLGVSK…NLRARYDQYG (66 aa)). The CR-type zinc finger occupies 135-213 (GVSKEIKVPS…CHGEGRYQKT (79 aa)). 8 residues coordinate Zn(2+): Cys-148, Cys-151, Cys-165, Cys-168, Cys-187, Cys-190, Cys-201, and Cys-204. CXXCXGXG motif repeat units lie at residues 148–155 (CEVCNGSG), 165–172 (CPTCHGAG), 187–194 (CPHCHGRG), and 201–208 (CRKCHGEG).

Belongs to the DnaJ family. In terms of assembly, homodimer. Zn(2+) is required as a cofactor.

It is found in the cytoplasm. Its function is as follows. Participates actively in the response to hyperosmotic and heat shock by preventing the aggregation of stress-denatured proteins and by disaggregating proteins, also in an autonomous, DnaK-independent fashion. Unfolded proteins bind initially to DnaJ; upon interaction with the DnaJ-bound protein, DnaK hydrolyzes its bound ATP, resulting in the formation of a stable complex. GrpE releases ADP from DnaK; ATP binding to DnaK triggers the release of the substrate protein, thus completing the reaction cycle. Several rounds of ATP-dependent interactions between DnaJ, DnaK and GrpE are required for fully efficient folding. Also involved, together with DnaK and GrpE, in the DNA replication of plasmids through activation of initiation proteins. This Aeromonas salmonicida (strain A449) protein is Chaperone protein DnaJ.